Consider the following 129-residue polypeptide: Glycine cleavage system H protein (129 aa).

Residues 24 to 106 (TFTVGISEHA…YGDGWLFRIK (83 aa)) form the Lipoyl-binding domain. N6-lipoyllysine is present on lysine 65.

The protein belongs to the GcvH family. The glycine cleavage system is composed of four proteins: P, T, L and H. (R)-lipoate is required as a cofactor.

Its function is as follows. The glycine cleavage system catalyzes the degradation of glycine. The H protein shuttles the methylamine group of glycine from the P protein to the T protein. The chain is Glycine cleavage system H protein from Pseudoalteromonas atlantica (strain T6c / ATCC BAA-1087).